The chain runs to 306 residues: Pantothenate kinase (306 aa).

91–98 (GSVAVGKS) lines the ATP pocket.

This sequence belongs to the prokaryotic pantothenate kinase family.

The protein resides in the cytoplasm. The catalysed reaction is (R)-pantothenate + ATP = (R)-4'-phosphopantothenate + ADP + H(+). It functions in the pathway cofactor biosynthesis; coenzyme A biosynthesis; CoA from (R)-pantothenate: step 1/5. The chain is Pantothenate kinase from Streptococcus suis (strain 98HAH33).